The following is a 716-amino-acid chain: Astellifadiene synthase (716 aa).

A terpene cyclase region spans residues 1-323 (MEFKYSTLID…SPRYYTDAKF (323 aa)). A Mg(2+)-binding site is contributed by D92. Residues D92, 179–182 (RIYD), N223, 227–231 (SWEKE), and 316–317 (RY) each bind substrate. Positions 92–96 (DDVID) match the DDXXD 1 motif. The short motif at 223-231 (NDLVSWEKE) is the NSE/DTE element. Positions 324 to 713 (SQRQLDWIKN…FQLKLILQFL (390 aa)) are prenyltransferase. Isopentenyl diphosphate-binding residues include K436, R439, and H468. Residues D475 and D479 each coordinate Mg(2+). Residues 475-479 (DDVED) carry the DDXXD 2 motif. R484 contributes to the dimethylallyl diphosphate binding site. R485 is a binding site for isopentenyl diphosphate. 6 residues coordinate dimethylallyl diphosphate: K562, T563, Q598, N605, K615, and K625.

This sequence in the N-terminal section; belongs to the terpene synthase family. In the C-terminal section; belongs to the FPP/GGPP synthase family. Hexamer. The cofactor is Mg(2+).

It catalyses the reaction isopentenyl diphosphate + (2E,6E)-farnesyl diphosphate = (2E,6E,10E)-geranylgeranyl diphosphate + diphosphate. The catalysed reaction is isopentenyl diphosphate + (2E,6E,10E)-geranylgeranyl diphosphate = (2E,6E,10E,14E)-geranylfarnesyl diphosphate + diphosphate. The enzyme catalyses (2E,6E,10E,14E)-geranylfarnesyl diphosphate = astellifadiene + diphosphate. Its pathway is secondary metabolite biosynthesis; terpenoid biosynthesis. In terms of biological role, bifunctional terpene synthase that converts dimethylallyl diphosphate (DMAPP) and isopentenyl diphosphate (IPP) into astellifadiene. The C-terminal prenyltransferase (PT) domain of EvAS catalyzes formation of geranylfarnesyl pyrophosphate (GFPP), whereas the N-terminal terpene cyclase (TC) domain catalyzes the cyclization of GFPP to astellifadiene. The protein is Astellifadiene synthase of Emericella variicolor (Aspergillus stellatus).